The primary structure comprises 237 residues: Pheromone-regulated membrane protein 8 (237 aa).

Residues 1 to 47 (MQTPSENTNAKSDSLDEPGAYLIEENVALPKDIFHSYLSYWIYEAAH) lie on the Cytoplasmic side of the membrane. The chain crosses the membrane as a helical span at residues 48–68 (CTPVMLLSLVIGVLISIIILF). At 69 to 74 (HDNENC) the chain is on the extracellular side. Residues 75–95 (VGVSVGFLLIFSGILVIVLIL) form a helical membrane-spanning segment. Over 96–237 (RFGPQISDED…QEYPGVDEFF (142 aa)) the chain is Cytoplasmic. The interval 174–201 (SSASNVKDAQSNDETAGTPNEAAESSSF) is disordered. Positions 236-237 (FF) are COPII binding.

The protein belongs to the DUP/COS family. As to quaternary structure, interacts with PRM9. Binds to SEC23/24 of COPII coated vesicles.

It localises to the membrane. It is found in the endoplasmic reticulum. In terms of biological role, may be involved in endoplasmic reticulum exit trafficking of proteins. The polypeptide is Pheromone-regulated membrane protein 8 (PRM8) (Saccharomyces cerevisiae (strain ATCC 204508 / S288c) (Baker's yeast)).